Here is a 331-residue protein sequence, read N- to C-terminus: Tetraacyldisaccharide 4'-kinase (331 aa).

60 to 67 provides a ligand contact to ATP; the sequence is TIGGTGKT.

Belongs to the LpxK family.

It carries out the reaction a lipid A disaccharide + ATP = a lipid IVA + ADP + H(+). It participates in glycolipid biosynthesis; lipid IV(A) biosynthesis; lipid IV(A) from (3R)-3-hydroxytetradecanoyl-[acyl-carrier-protein] and UDP-N-acetyl-alpha-D-glucosamine: step 6/6. In terms of biological role, transfers the gamma-phosphate of ATP to the 4'-position of a tetraacyldisaccharide 1-phosphate intermediate (termed DS-1-P) to form tetraacyldisaccharide 1,4'-bis-phosphate (lipid IVA). The sequence is that of Tetraacyldisaccharide 4'-kinase from Pseudomonas syringae pv. tomato (strain ATCC BAA-871 / DC3000).